A 453-amino-acid chain; its full sequence is Phosphoglucosamine mutase (453 aa).

Serine 110 functions as the Phosphoserine intermediate in the catalytic mechanism. Mg(2+)-binding residues include serine 110, aspartate 248, aspartate 250, and aspartate 252. Position 110 is a phosphoserine (serine 110).

The protein belongs to the phosphohexose mutase family. It depends on Mg(2+) as a cofactor. Post-translationally, activated by phosphorylation.

The enzyme catalyses alpha-D-glucosamine 1-phosphate = D-glucosamine 6-phosphate. Catalyzes the conversion of glucosamine-6-phosphate to glucosamine-1-phosphate. In Mycolicibacterium smegmatis (strain ATCC 700084 / mc(2)155) (Mycobacterium smegmatis), this protein is Phosphoglucosamine mutase.